The primary structure comprises 449 residues: Glucose-6-phosphate isomerase (449 aa).

Catalysis depends on glutamate 291, which acts as the Proton donor. Catalysis depends on residues histidine 312 and lysine 426.

This sequence belongs to the GPI family.

Its subcellular location is the cytoplasm. It catalyses the reaction alpha-D-glucose 6-phosphate = beta-D-fructose 6-phosphate. Its pathway is carbohydrate biosynthesis; gluconeogenesis. The protein operates within carbohydrate degradation; glycolysis; D-glyceraldehyde 3-phosphate and glycerone phosphate from D-glucose: step 2/4. Catalyzes the reversible isomerization of glucose-6-phosphate to fructose-6-phosphate. In Streptococcus pyogenes serotype M6 (strain ATCC BAA-946 / MGAS10394), this protein is Glucose-6-phosphate isomerase.